A 309-amino-acid chain; its full sequence is Shugoshin (309 aa).

Positions 42-77 form a coiled coil; sequence NLLLKQQVVQCTKTIEKLRNENVALRQKNQELIDGT. Disordered regions lie at residues 165-195 and 210-309; these read FDNNSSQSTSSIQNAVNGTPRKKQSVGKGRR and EEAS…NTFF. The segment covering 167 to 178 has biased composition (low complexity); the sequence is NNSSQSTSSIQN. Basic residues predominate over residues 184–193; the sequence is PRKKQSVGKG.

This sequence belongs to the shugoshin family. In terms of tissue distribution, expressed in gonads.

It localises to the nucleus. Its subcellular location is the chromosome. The protein resides in the centromere. Its function is as follows. Component of cell cycle checkpoints, which ensures chromosome segregation during meiosis and mitosis. During meiotic prophase, it is involved in the regulation of the synapsis checkpoint, which monitors whether homologous chromosomes have synapsed, and the DNA damage response. Plays a central role in chromosome cohesion during cell division by preventing premature dissociation of cohesin complex after prophase, when most of cohesin complex dissociates from chromosomes arms. This Caenorhabditis elegans protein is Shugoshin.